A 169-amino-acid polypeptide reads, in one-letter code: Putative ribonuclease VapC50 (169 aa).

In terms of biological role, toxic component of a type II toxin-antitoxin (TA) system. An RNase. The cognate antitoxin is VapB50. This is Putative ribonuclease VapC50 from Mycobacterium tuberculosis (strain ATCC 25618 / H37Rv).